Consider the following 155-residue polypeptide: Protein-export protein SecB (155 aa).

This sequence belongs to the SecB family. In terms of assembly, homotetramer, a dimer of dimers. One homotetramer interacts with 1 SecA dimer.

The protein localises to the cytoplasm. One of the proteins required for the normal export of preproteins out of the cell cytoplasm. It is a molecular chaperone that binds to a subset of precursor proteins, maintaining them in a translocation-competent state. It also specifically binds to its receptor SecA. The protein is Protein-export protein SecB of Enterobacter sp. (strain 638).